We begin with the raw amino-acid sequence, 333 residues long: Glutamyl-tRNA reductase (333 aa).

Residues 60 to 63 (TCHR), serine 110, 115 to 117 (ETE), and glutamine 121 each bind substrate. Cysteine 61 serves as the catalytic Nucleophile. Position 189 to 194 (189 to 194 (GYSEIN)) interacts with NADP(+).

This sequence belongs to the glutamyl-tRNA reductase family. In terms of assembly, homodimer.

It carries out the reaction (S)-4-amino-5-oxopentanoate + tRNA(Glu) + NADP(+) = L-glutamyl-tRNA(Glu) + NADPH + H(+). It functions in the pathway porphyrin-containing compound metabolism; protoporphyrin-IX biosynthesis; 5-aminolevulinate from L-glutamyl-tRNA(Glu): step 1/2. Its function is as follows. Catalyzes the NADPH-dependent reduction of glutamyl-tRNA(Glu) to glutamate 1-semialdehyde (GSA). The protein is Glutamyl-tRNA reductase of Chlamydia muridarum (strain MoPn / Nigg).